The chain runs to 702 residues: Elongation factor G (702 aa).

The tr-type G domain occupies threonine 8 to threonine 290. Residues alanine 17 to threonine 24, aspartate 88 to histidine 92, and asparagine 142 to aspartate 145 contribute to the GTP site.

It belongs to the TRAFAC class translation factor GTPase superfamily. Classic translation factor GTPase family. EF-G/EF-2 subfamily.

It localises to the cytoplasm. Its function is as follows. Catalyzes the GTP-dependent ribosomal translocation step during translation elongation. During this step, the ribosome changes from the pre-translocational (PRE) to the post-translocational (POST) state as the newly formed A-site-bound peptidyl-tRNA and P-site-bound deacylated tRNA move to the P and E sites, respectively. Catalyzes the coordinated movement of the two tRNA molecules, the mRNA and conformational changes in the ribosome. The protein is Elongation factor G of Erwinia tasmaniensis (strain DSM 17950 / CFBP 7177 / CIP 109463 / NCPPB 4357 / Et1/99).